The sequence spans 110 residues: uncharacterized protein (110 aa).

This is an uncharacterized protein from Methanocaldococcus jannaschii (strain ATCC 43067 / DSM 2661 / JAL-1 / JCM 10045 / NBRC 100440) (Methanococcus jannaschii).